A 492-amino-acid polypeptide reads, in one-letter code: Probable glycine dehydrogenase (decarboxylating) subunit 2 (492 aa).

K274 is modified (N6-(pyridoxal phosphate)lysine).

This sequence belongs to the GcvP family. C-terminal subunit subfamily. As to quaternary structure, the glycine cleavage system is composed of four proteins: P, T, L and H. In this organism, the P 'protein' is a heterodimer of two subunits. Pyridoxal 5'-phosphate serves as cofactor.

The catalysed reaction is N(6)-[(R)-lipoyl]-L-lysyl-[glycine-cleavage complex H protein] + glycine + H(+) = N(6)-[(R)-S(8)-aminomethyldihydrolipoyl]-L-lysyl-[glycine-cleavage complex H protein] + CO2. Its function is as follows. The glycine cleavage system catalyzes the degradation of glycine. The P protein binds the alpha-amino group of glycine through its pyridoxal phosphate cofactor; CO(2) is released and the remaining methylamine moiety is then transferred to the lipoamide cofactor of the H protein. This is Probable glycine dehydrogenase (decarboxylating) subunit 2 from Exiguobacterium sibiricum (strain DSM 17290 / CCUG 55495 / CIP 109462 / JCM 13490 / 255-15).